The chain runs to 783 residues: MPGVIPSESNGLSRGSPSKKNRLSLKFFQKKETKRALDFTDSQENEEKTSEYKGSEIDQVVPAAQSSPINCEKRENLLPFVGLNNLGNTCYLNSILQVLYFCPGFKSGVKHLFNIISRKKEALKDEANQKDKGNCKEDSLASYELICSLQSLIISVEQLQASFLLNPEKYTDELATQPRRLLNTLRELNPMYEGYLQHDAQEVLQCILGNIQETCQLLKKEEVKNVEDLSTKVEEYQKEEMSDNNSMEMDNMRHSEDYKEKLSKGNGKRKSDAEFGNMKKKVKISKEHQSSEENQRQTRSKRKAAGDTLEISHKIIPKHISENESTRPSQRKSKVKINWLKSAAKQPSILSKFCSMGKIATNQGSKGHCKENEYDLEEDLGKYENDNTTNDCELESPGNNDMPVHVNEVKPINKGAEQIGFELVEKLFQGQLVLRTRCLECESLTERREDFQDISVPVQEDELSKVEENSEISPEPKTEMKTLRWAISQFASVERIVGEDKYFCENCHHYTEAERSLLFDKMPEVITIHLKCFAASGLEFDCYGGGLSKINTPLLTPLKLSLEEWSTKPTNDSYGLFAVVMHSGITISSGHYTASVKVTDLNSLELDKENFVIDQTCEIGKPEPLNEEEVRGVVENYDNEEVSIRVSGNNQPSKVLNKKNVEAIGLLGGQKSKADYELYNKASNPDKVASTALPENRNSETNNTNGTDESDSNKESSDQTGINISGFENKISYVVQSLKEYEGKWLLFDDSEVKVTEEKDFLNSLSPSTSPTSTPYLLFYKKL.

Disordered regions lie at residues 1 to 22 (MPGV…KKNR) and 34 to 55 (KRAL…YKGS). Residues 7 to 16 (SESNGLSRGS) show a composition bias toward polar residues. Phosphoserine occurs at positions 16 and 42. A compositionally biased stretch (basic and acidic residues) spans 45–55 (NEEKTSEYKGS). Serine 67 carries the post-translational modification Phosphoserine. The 703-residue stretch at 81-783 (VGLNNLGNTC…TPYLLFYKKL (703 aa)) folds into the USP domain. Cysteine 90 acts as the Nucleophile in catalysis. The segment at 234–311 (EEYQKEEMSD…RKAAGDTLEI (78 aa)) is disordered. Basic and acidic residues-rich tracts occupy residues 250-273 (DNMR…KSDA) and 284-296 (ISKE…ENQR). Residue serine 473 is modified to Phosphoserine. The Proton acceptor role is filled by histidine 591. Positions 685–722 (PDKVASTALPENRNSETNNTNGTDESDSNKESSDQTGI) are disordered. Serine 766 is subject to Phosphoserine.

Belongs to the peptidase C19 family. As to quaternary structure, interacts with FANCD2 and PCNA. Interacts with WDR48. Interacts with ATAD5; the interaction regulates USP1-mediated PCNA deubiquitination. Post-translationally, autocatalytic cleavage of USP1 following UV irradiation inactivates it, leading to an increase in ubiquitinated PCNA, recruitment of POLH and translesion synthesis. Ubiquitinated by the CRL2(KLHDC2) complex following autocatalytic cleavage, leading to its degradation: the CRL2(KLHDC2) complex recognizes the diglycine (Gly-Gly) at the C-terminus.

It localises to the nucleus. It carries out the reaction Thiol-dependent hydrolysis of ester, thioester, amide, peptide and isopeptide bonds formed by the C-terminal Gly of ubiquitin (a 76-residue protein attached to proteins as an intracellular targeting signal).. Negative regulator of DNA damage repair which specifically deubiquitinates monoubiquitinated FANCD2. Also involved in PCNA-mediated translesion synthesis (TLS) by deubiquitinating monoubiquitinated PCNA. Has almost no deubiquitinating activity by itself and requires the interaction with WDR48 to have a high activity. In Bos taurus (Bovine), this protein is Ubiquitin carboxyl-terminal hydrolase 1.